The chain runs to 640 residues: Threonine--tRNA ligase (640 aa).

The interval 224 to 525 (DHRKLGKELD…LTEHYAGAFP (302 aa)) is catalytic. The Zn(2+) site is built by Cys-323, His-374, and His-502.

This sequence belongs to the class-II aminoacyl-tRNA synthetase family. As to quaternary structure, homodimer. Zn(2+) is required as a cofactor.

It is found in the cytoplasm. It catalyses the reaction tRNA(Thr) + L-threonine + ATP = L-threonyl-tRNA(Thr) + AMP + diphosphate + H(+). Catalyzes the attachment of threonine to tRNA(Thr) in a two-step reaction: L-threonine is first activated by ATP to form Thr-AMP and then transferred to the acceptor end of tRNA(Thr). Also edits incorrectly charged L-seryl-tRNA(Thr). The chain is Threonine--tRNA ligase from Tropheryma whipplei (strain TW08/27) (Whipple's bacillus).